Here is a 503-residue protein sequence, read N- to C-terminus: ATP synthase subunit alpha (503 aa).

170-177 (GDRATGKT) contributes to the ATP binding site.

This sequence belongs to the ATPase alpha/beta chains family. As to quaternary structure, F-type ATPases have 2 components, CF(1) - the catalytic core - and CF(0) - the membrane proton channel. CF(1) has five subunits: alpha(3), beta(3), gamma(1), delta(1), epsilon(1). CF(0) has three main subunits: a(1), b(2) and c(9-12). The alpha and beta chains form an alternating ring which encloses part of the gamma chain. CF(1) is attached to CF(0) by a central stalk formed by the gamma and epsilon chains, while a peripheral stalk is formed by the delta and b chains.

The protein resides in the cell inner membrane. It catalyses the reaction ATP + H2O + 4 H(+)(in) = ADP + phosphate + 5 H(+)(out). Functionally, produces ATP from ADP in the presence of a proton gradient across the membrane. The alpha chain is a regulatory subunit. In Aquifex aeolicus (strain VF5), this protein is ATP synthase subunit alpha.